Here is a 410-residue protein sequence, read N- to C-terminus: Acetate kinase (410 aa).

Residue asparagine 7 participates in Mg(2+) binding. Lysine 14 provides a ligand contact to ATP. Arginine 88 is a binding site for substrate. The active-site Proton donor/acceptor is aspartate 145. Residues 203–207, 278–280, and 326–330 each bind ATP; these read HAGNG, DTR, and GIGEN. Glutamate 379 is a binding site for Mg(2+).

It belongs to the acetokinase family. Homodimer. Requires Mg(2+) as cofactor. Mn(2+) is required as a cofactor.

It is found in the cytoplasm. The catalysed reaction is acetate + ATP = acetyl phosphate + ADP. Its pathway is metabolic intermediate biosynthesis; acetyl-CoA biosynthesis; acetyl-CoA from acetate: step 1/2. Its function is as follows. Catalyzes the formation of acetyl phosphate from acetate and ATP. Can also catalyze the reverse reaction. This is Acetate kinase from Onion yellows phytoplasma (strain OY-M).